The primary structure comprises 187 residues: Elongation factor P (187 aa).

It belongs to the elongation factor P family.

It is found in the cytoplasm. It participates in protein biosynthesis; polypeptide chain elongation. Its function is as follows. Involved in peptide bond synthesis. Stimulates efficient translation and peptide-bond synthesis on native or reconstituted 70S ribosomes in vitro. Probably functions indirectly by altering the affinity of the ribosome for aminoacyl-tRNA, thus increasing their reactivity as acceptors for peptidyl transferase. This Mycolicibacterium gilvum (strain PYR-GCK) (Mycobacterium gilvum (strain PYR-GCK)) protein is Elongation factor P.